Reading from the N-terminus, the 416-residue chain is MSICTSYDIELWKIIQQETIRQEEHIELIASENYVSTQVMKAQGSQLTNKYAEGYPGKRYYGGCEYVDMIEQLGINRAKELFSADYANIQPHSGSQANFSVYNALLHPGDTILSMHLNHGGHLTHGSQVNFSGKLYNAVFYGVDENGCINYEKVHHLAVKHRPKMIVGGFSAYSGIINWSNLRQIADAVQAYLFIDMAHITGLVAAGIYPNPLPHAHVVTATTHKTLAGPRGGLILASGGNDALYKKLDASVFPGSQGGPLMHVIAAKAIALKEAMDPSFKVYQQKIVQNAKIMVKEFALREFKIISGMTHNHLFLLDLRDKNITGKDASTALERANIIVNKNSIPNDFRSPFITSGIRIGTPAITRRNFNENDVRKLSHWICDILNHIDNNEIIFSIKNKVLRICSQYPIYNKSY.

Residues Leu-117 and 121–123 (GHL) each bind (6S)-5,6,7,8-tetrahydrofolate. Lys-225 carries the post-translational modification N6-(pyridoxal phosphate)lysine. 351-353 (SPF) provides a ligand contact to (6S)-5,6,7,8-tetrahydrofolate.

The protein belongs to the SHMT family. As to quaternary structure, homodimer. It depends on pyridoxal 5'-phosphate as a cofactor.

Its subcellular location is the cytoplasm. The enzyme catalyses (6R)-5,10-methylene-5,6,7,8-tetrahydrofolate + glycine + H2O = (6S)-5,6,7,8-tetrahydrofolate + L-serine. It participates in one-carbon metabolism; tetrahydrofolate interconversion. Its pathway is amino-acid biosynthesis; glycine biosynthesis; glycine from L-serine: step 1/1. In terms of biological role, catalyzes the reversible interconversion of serine and glycine with tetrahydrofolate (THF) serving as the one-carbon carrier. This reaction serves as the major source of one-carbon groups required for the biosynthesis of purines, thymidylate, methionine, and other important biomolecules. Also exhibits THF-independent aldolase activity toward beta-hydroxyamino acids, producing glycine and aldehydes, via a retro-aldol mechanism. In Blochmanniella pennsylvanica (strain BPEN), this protein is Serine hydroxymethyltransferase.